The following is a 180-amino-acid chain: Mitochondrial inner membrane protease subunit 2 (180 aa).

A helical membrane pass occupies residues 19–39 (LVGITLWVPVLMFVEQHVVSV). Catalysis depends on residues Ser46 and Lys92.

The protein belongs to the peptidase S26 family. IMP2 subfamily. As to quaternary structure, heterodimer of 2 subunits, imp1 and imp2.

Its subcellular location is the mitochondrion inner membrane. Catalyzes the removal of transit peptides required for the targeting of proteins from the mitochondrial matrix, across the inner membrane, into the inter-membrane space. This is Mitochondrial inner membrane protease subunit 2 from Schizosaccharomyces pombe (strain 972 / ATCC 24843) (Fission yeast).